The sequence spans 148 residues: Arginine repressor (148 aa).

The protein belongs to the ArgR family.

The protein resides in the cytoplasm. The protein operates within amino-acid biosynthesis; L-arginine biosynthesis [regulation]. Functionally, regulates arginine biosynthesis genes. The sequence is that of Arginine repressor from Chlorobium luteolum (strain DSM 273 / BCRC 81028 / 2530) (Pelodictyon luteolum).